The following is a 526-amino-acid chain: Importin subunit alpha-1a (526 aa).

The IBB domain occupies 1–58 (MSLRPSERVEVRRNRYKVAVDAEEGRRRREDNMVEIRKSRREESLLKKRREGLQAQAP). 8 ARM repeats span residues 105-145 (SPPI…NIAS), 148-187 (SENT…NVAG), 190-230 (PKCR…NFCR), 232-271 (KPQP…YLSD), 274-313 (NDKI…NIVT), 316-356 (DAQT…NITA), 359-398 (KDQI…NATS), and 402-441 (HDQI…NILK).

Belongs to the importin alpha family. In terms of assembly, forms a complex with importin subunit beta-1. The whole complex, most stable and composed of importin alpha, importin beta and NLS substrate, is referred to as PTAC or pore targeting complex. Interacts with mungbean yellow mosaic virus capsid protein. As to expression, highly expressed in callus, followed by root and etiolated leaf. Low expression in green leaf.

It is found in the cytoplasm. It localises to the perinuclear region. Functions in nuclear protein import. Binds specifically and directly to substrates containing either a simple or bipartite NLS motif. Promotes docking of import substrates to the nuclear envelope. This Oryza sativa subsp. japonica (Rice) protein is Importin subunit alpha-1a.